We begin with the raw amino-acid sequence, 272 residues long: Leucoagglutinating phytohemagglutinin (272 aa).

The signal sequence occupies residues 1–20; that stretch reads MASSKFFTVLFLVLLTHANS. The N-linked (GlcNAc...) (high mannose) asparagine glycan is linked to Asn-32. Residue Asn-80 is glycosylated (N-linked (GlcNAc...) (complex) asparagine).

It belongs to the leguminous lectin family. In terms of assembly, homotetramer. Post-translationally, N-glycosylated on Asn-80; contains xylose.

In terms of biological role, this insecticidal carbohydrate-binding lectin is toxic for the cowpea weevil. This Phaseolus vulgaris (Kidney bean) protein is Leucoagglutinating phytohemagglutinin (DLEC2).